The primary structure comprises 121 residues: Chronic lymphocytic leukemia up-regulated protein 1 (121 aa).

In terms of tissue distribution, specifically expressed in chronic lymphocytic leukemia (CLL) cells from patients without immunoglobulin heavy-chain hypermutations. Expression is detected in all CLL cells and levels are similar in patients before and after treatment.

It localises to the cytoplasm. The chain is Chronic lymphocytic leukemia up-regulated protein 1 (CLLU1) from Homo sapiens (Human).